Consider the following 243-residue polypeptide: Small ribosomal subunit protein uS3 (243 aa).

The region spanning 39–110 (IRKFIHKKYG…QVRINVVEVE (72 aa)) is the KH type-2 domain. Residues 217-243 (QQLPVGATPRRRAGRRPQQFEDRSNEG) are disordered. Basic and acidic residues predominate over residues 234 to 243 (QQFEDRSNEG).

This sequence belongs to the universal ribosomal protein uS3 family. As to quaternary structure, part of the 30S ribosomal subunit. Forms a tight complex with proteins S10 and S14.

Its function is as follows. Binds the lower part of the 30S subunit head. Binds mRNA in the 70S ribosome, positioning it for translation. The protein is Small ribosomal subunit protein uS3 of Synechococcus sp. (strain WH7803).